The following is a 189-amino-acid chain: Elongation factor P (189 aa).

The protein belongs to the elongation factor P family.

It localises to the cytoplasm. The protein operates within protein biosynthesis; polypeptide chain elongation. Its function is as follows. Involved in peptide bond synthesis. Stimulates efficient translation and peptide-bond synthesis on native or reconstituted 70S ribosomes in vitro. Probably functions indirectly by altering the affinity of the ribosome for aminoacyl-tRNA, thus increasing their reactivity as acceptors for peptidyl transferase. The polypeptide is Elongation factor P (Rhizobium etli (strain CIAT 652)).